Consider the following 322-residue polypeptide: uncharacterized protein (322 aa).

The disordered stretch occupies residues 174 to 207 (LQSRPTEGAKVSTNGRGFSSRPTGEGNFFGPKGR). Over residues 184-195 (VSTNGRGFSSRP) the composition is skewed to polar residues.

It localises to the mitochondrion. This is an uncharacterized protein from Marchantia polymorpha (Common liverwort).